The sequence spans 906 residues: Patched domain-containing protein 3 (906 aa).

Residues Met-1–Arg-70 form a disordered region. 2 N-linked (GlcNAc...) asparagine glycosylation sites follow: Asn-148 and Asn-235. Transmembrane regions (helical) follow at residues Thr-338–Cys-358, Val-370–Leu-390, Leu-392–Val-412, Val-442–Thr-462, Gly-476–Leu-496, Phe-559–Val-579, Val-760–Cys-780, Leu-782–Trp-802, Leu-814–Ser-834, Leu-848–Val-868, and Ile-883–Leu-903. In terms of domain architecture, SSD spans Val-339–Leu-496.

Belongs to the patched family. Expressed in germ cells of the testis (at protein level).

It is found in the cell projection. The protein resides in the cilium. Its subcellular location is the flagellum membrane. It localises to the endoplasmic reticulum membrane. Its function is as follows. May play a role in sperm development or sperm function. However, does not appear to have an essential role in spermatogenesis or male fertility. This chain is Patched domain-containing protein 3 (Ptchd3), found in Mus musculus (Mouse).